The primary structure comprises 322 residues: Undecaprenyl-phosphate 4-deoxy-4-formamido-L-arabinose transferase (322 aa).

At 1 to 235 (MFEIHPVKKV…TCLTTTPLRM (235 aa)) the chain is on the cytoplasmic side. The helical transmembrane segment at 236-256 (LSLLGSIIAIGGFSIAVLLVI) threads the bilayer. Over 257-269 (LRLTFGPQWAAEG) the chain is Periplasmic. Residues 270–290 (VFMLFAVLFTFIGAQFIGMGL) form a helical membrane-spanning segment. The Cytoplasmic segment spans residues 291-322 (LGEYIGRIYTDVRARPRYFVQQVIRPSSKENE).

It belongs to the glycosyltransferase 2 family.

It is found in the cell inner membrane. It carries out the reaction UDP-4-deoxy-4-formamido-beta-L-arabinose + di-trans,octa-cis-undecaprenyl phosphate = 4-deoxy-4-formamido-alpha-L-arabinopyranosyl di-trans,octa-cis-undecaprenyl phosphate + UDP. It functions in the pathway glycolipid biosynthesis; 4-amino-4-deoxy-alpha-L-arabinose undecaprenyl phosphate biosynthesis; 4-amino-4-deoxy-alpha-L-arabinose undecaprenyl phosphate from UDP-4-deoxy-4-formamido-beta-L-arabinose and undecaprenyl phosphate: step 1/2. The protein operates within bacterial outer membrane biogenesis; lipopolysaccharide biosynthesis. Functionally, catalyzes the transfer of 4-deoxy-4-formamido-L-arabinose from UDP to undecaprenyl phosphate. The modified arabinose is attached to lipid A and is required for resistance to polymyxin and cationic antimicrobial peptides. In Shigella flexneri, this protein is Undecaprenyl-phosphate 4-deoxy-4-formamido-L-arabinose transferase.